We begin with the raw amino-acid sequence, 423 residues long: F-box/LRR-repeat protein 2 (423 aa).

Residues 9-55 (GLINKKLPKELLLRIFSFLDIVTLCRCAQISKAWNILALDGSNWQRI) enclose the F-box domain. LRR repeat units follow at residues 61–87 (QTDV…SLRG), 88–113 (CIGV…NLNG), 114–139 (CTKI…DLTS), 140–165 (CVSI…NLSW), 166–191 (CDQI…LLRG), 192–217 (CTQL…NLQS), 218–243 (CSRI…CLSG), 244–269 (CSNL…EAAR), 270–295 (CSHL…DLEE), 296–321 (CILI…SLSH), 322–350 (CELI…ELDN), 351–375 (CLLI…ELYD), and 376–401 (CQQV…AYFA). Residues 80–90 (LRKLSLRGCIG) form an interaction with Calmodulin region. Lys201 is covalently cross-linked (Glycyl lysine isopeptide (Lys-Gly) (interchain with G-Cter in ubiquitin)). Residue Thr404 is modified to Phosphothreonine. A lipid anchor (S-geranylgeranyl cysteine) is attached at Cys420. Residues 420–423 (CVIL) carry the CAAX motif motif.

As to quaternary structure, part of the SCF (SKP1-CUL1-F-box) E3 ubiquitin-protein ligase complex SCF(FBXL2) composed of CUL1, SKP1, RBX1 and FBXL2. Interacts with calmodulin; may antagonize substrate ubiquitination by SCF(FBXL2). May interact with PIK3R1. Interacts with PTPN13. In terms of assembly, (Microbial infection) Interacts with hepatitis C virus non-structural protein 5A (NS5A) and less efficiently, with hepatitis C virus non-structural protein 5B (NS5B); a reaction crucial for hepatitis C virus RNA replication. Post-translationally, phosphorylated by GSK-beta (GSK3B), promoting recognition by FBXO3, leading to its ubiquitination by the SCF(FBXO3) complex. In terms of processing, ubiquitinated at Lys-201 by the SCF(FBXO3) complex in response to lipopolysaccharide (LPS), leading to its degradation by the proteasome. Expressed in brain, heart, kidney, liver, lung, pancreas and placenta.

It localises to the membrane. It participates in protein modification; protein ubiquitination. In terms of biological role, calcium-activated substrate recognition component of the SCF (SKP1-cullin-F-box protein) E3 ubiquitin-protein ligase complex, SCF(FBXL2), which mediates the ubiquitination and subsequent proteasomal degradation of target proteins. Unlike many F-box proteins, FBXL2 does not seem to target phosphodegron within its substrates but rather calmodulin-binding motifs and is thereby antagonized by calmodulin. This is the case for the cyclins CCND2 and CCND3 which polyubiquitination and subsequent degradation are inhibited by calmodulin. Through CCND2 and CCND3 degradation induces cell-cycle arrest in G(0). SCF(FBXL2) also mediates PIK3R2 ubiquitination and proteasomal degradation thereby regulating phosphatidylinositol 3-kinase signaling and autophagy. PCYT1A monoubiquitination by SCF(FBXL2) and subsequent degradation regulates synthesis of phosphatidylcholine, which is utilized for formation of membranes and of pulmonary surfactant. The SCF(FBXL2) complex acts as a regulator of inflammation by mediating ubiquitination and degradation of TRAF proteins (TRAF1, TRAF2, TRAF3, TRAF4, TRAF5 and TRAF6). The SCF(FBXL2) complex acts as a negative regulator of the NLRP3 inflammasome by mediating ubiquitination and degradation of NLRP3. In Homo sapiens (Human), this protein is F-box/LRR-repeat protein 2.